The following is a 170-amino-acid chain: NAD(P)H-quinone oxidoreductase subunit I, chloroplastic (170 aa).

4Fe-4S ferredoxin-type domains are found at residues 55–84 and 95–124; these read GRIH…VDWK and LNYS…MTEE. Positions 64, 67, 70, 74, 104, 107, 110, and 114 each coordinate [4Fe-4S] cluster.

The protein belongs to the complex I 23 kDa subunit family. As to quaternary structure, NDH is composed of at least 16 different subunits, 5 of which are encoded in the nucleus. The cofactor is [4Fe-4S] cluster.

The protein resides in the plastid. It localises to the chloroplast thylakoid membrane. The catalysed reaction is a plastoquinone + NADH + (n+1) H(+)(in) = a plastoquinol + NAD(+) + n H(+)(out). It carries out the reaction a plastoquinone + NADPH + (n+1) H(+)(in) = a plastoquinol + NADP(+) + n H(+)(out). Functionally, NDH shuttles electrons from NAD(P)H:plastoquinone, via FMN and iron-sulfur (Fe-S) centers, to quinones in the photosynthetic chain and possibly in a chloroplast respiratory chain. The immediate electron acceptor for the enzyme in this species is believed to be plastoquinone. Couples the redox reaction to proton translocation, and thus conserves the redox energy in a proton gradient. This is NAD(P)H-quinone oxidoreductase subunit I, chloroplastic from Spinacia oleracea (Spinach).